The following is a 411-amino-acid chain: Serine--tRNA ligase (411 aa).

Residue 226 to 228 (TSE) coordinates L-serine. 257-259 (RQE) is an ATP binding site. L-serine is bound at residue Glu-280. 344-347 (EISS) contributes to the ATP binding site. Ser-379 contributes to the L-serine binding site.

The protein belongs to the class-II aminoacyl-tRNA synthetase family. Type-1 seryl-tRNA synthetase subfamily. As to quaternary structure, homodimer. The tRNA molecule binds across the dimer.

It localises to the cytoplasm. It catalyses the reaction tRNA(Ser) + L-serine + ATP = L-seryl-tRNA(Ser) + AMP + diphosphate + H(+). The catalysed reaction is tRNA(Sec) + L-serine + ATP = L-seryl-tRNA(Sec) + AMP + diphosphate + H(+). It functions in the pathway aminoacyl-tRNA biosynthesis; selenocysteinyl-tRNA(Sec) biosynthesis; L-seryl-tRNA(Sec) from L-serine and tRNA(Sec): step 1/1. Its function is as follows. Catalyzes the attachment of serine to tRNA(Ser). Is also able to aminoacylate tRNA(Sec) with serine, to form the misacylated tRNA L-seryl-tRNA(Sec), which will be further converted into selenocysteinyl-tRNA(Sec). This Campylobacter lari (strain RM2100 / D67 / ATCC BAA-1060) protein is Serine--tRNA ligase.